Consider the following 45-residue polypeptide: Rubredoxin-1 (45 aa).

Met-1 carries the N-formylmethionine modification. The Rubredoxin-like domain maps to 1–45 (MQKYVCNVCGYEYDPAEHDNVPFDQLPDDWCCPVCGVSKDQFSPA). 4 residues coordinate Fe cation: Cys-6, Cys-9, Cys-32, and Cys-35.

This sequence belongs to the rubredoxin family. The cofactor is Fe(3+).

The protein resides in the cytoplasm. Its function is as follows. Rubredoxin is a small nonheme, iron protein lacking acid-labile sulfide. Its single Fe, chelated to 4 Cys, functions as an electron acceptor and may also stabilize the conformation of the molecule. Functionally, electron acceptor for cytoplasmic lactate dehydrogenase. The polypeptide is Rubredoxin-1 (rd1) (Desulfovibrio desulfuricans (strain ATCC 27774 / DSM 6949 / MB)).